The primary structure comprises 62 residues: Small ribosomal subunit protein bS21 (62 aa).

The span at 43–52 shows a compositional bias: basic and acidic residues; the sequence is VKKKLKSEAA. Residues 43-62 form a disordered region; the sequence is VKKKLKSEAARKRKNRRRFK. Over residues 53–62 the composition is skewed to basic residues; that stretch reads RKRKNRRRFK.

This sequence belongs to the bacterial ribosomal protein bS21 family.

This chain is Small ribosomal subunit protein bS21, found in Lactiplantibacillus plantarum (strain ATCC BAA-793 / NCIMB 8826 / WCFS1) (Lactobacillus plantarum).